A 117-amino-acid chain; its full sequence is Small ribosomal subunit protein bS6 (117 aa).

It belongs to the bacterial ribosomal protein bS6 family.

Its function is as follows. Binds together with bS18 to 16S ribosomal RNA. The protein is Small ribosomal subunit protein bS6 of Trichodesmium erythraeum (strain IMS101).